We begin with the raw amino-acid sequence, 162 residues long: 2-C-methyl-D-erythritol 2,4-cyclodiphosphate synthase (162 aa).

2 residues coordinate a divalent metal cation: Asp-12 and His-14. 4-CDP-2-C-methyl-D-erythritol 2-phosphate is bound by residues Asp-12–His-14 and His-38–Ser-39. Residue His-46 participates in a divalent metal cation binding. 4-CDP-2-C-methyl-D-erythritol 2-phosphate contacts are provided by residues Asp-60–Gly-62, Thr-136–Glu-139, Phe-143, and Arg-146.

It belongs to the IspF family. Homotrimer. A divalent metal cation serves as cofactor.

The catalysed reaction is 4-CDP-2-C-methyl-D-erythritol 2-phosphate = 2-C-methyl-D-erythritol 2,4-cyclic diphosphate + CMP. Its pathway is isoprenoid biosynthesis; isopentenyl diphosphate biosynthesis via DXP pathway; isopentenyl diphosphate from 1-deoxy-D-xylulose 5-phosphate: step 4/6. Functionally, involved in the biosynthesis of isopentenyl diphosphate (IPP) and dimethylallyl diphosphate (DMAPP), two major building blocks of isoprenoid compounds. Catalyzes the conversion of 4-diphosphocytidyl-2-C-methyl-D-erythritol 2-phosphate (CDP-ME2P) to 2-C-methyl-D-erythritol 2,4-cyclodiphosphate (ME-CPP) with a corresponding release of cytidine 5-monophosphate (CMP). This is 2-C-methyl-D-erythritol 2,4-cyclodiphosphate synthase from Porphyromonas gingivalis (strain ATCC 33277 / DSM 20709 / CIP 103683 / JCM 12257 / NCTC 11834 / 2561).